The primary structure comprises 286 residues: Phosphate import ATP-binding protein PstB (286 aa).

Residues I40 to I281 form the ABC transporter domain. G72 to S79 contributes to the ATP binding site.

The protein belongs to the ABC transporter superfamily. Phosphate importer (TC 3.A.1.7) family. The complex is composed of two ATP-binding proteins (PstB), two transmembrane proteins (PstC and PstA) and a solute-binding protein (PstS).

The protein resides in the cell inner membrane. It carries out the reaction phosphate(out) + ATP + H2O = ADP + 2 phosphate(in) + H(+). In terms of biological role, part of the ABC transporter complex PstSACB involved in phosphate import. Responsible for energy coupling to the transport system. This Granulibacter bethesdensis (strain ATCC BAA-1260 / CGDNIH1) protein is Phosphate import ATP-binding protein PstB.